A 624-amino-acid polypeptide reads, in one-letter code: Glutaminase 2 (624 aa).

A disordered region spans residues 1 to 20; the sequence is MDTQPIRLPSVAGATRSAGY. The interval 43–325 is glutaminase; it reads GELADYIPEL…LSARFDLHML (283 aa). Substrate-binding residues include Ser85, Asn134, Glu178, Asn185, Tyr209, Tyr261, and Val279. The region spanning 355-466 is the STAS domain; sequence QQILDERHSD…ALLDDAIEWA (112 aa). A nucleoside 3',5'-cyclic phosphate is bound at residue 491–608; sequence LLAELDTDEI…IMRNLAAILA (118 aa).

Belongs to the glutaminase family. In terms of assembly, homotetramer.

It catalyses the reaction L-glutamine + H2O = L-glutamate + NH4(+). The protein is Glutaminase 2 (glsA2) of Bradyrhizobium diazoefficiens (strain JCM 10833 / BCRC 13528 / IAM 13628 / NBRC 14792 / USDA 110).